Reading from the N-terminus, the 571-residue chain is Urease subunit alpha (571 aa).

The region spanning G132–F571 is the Urease domain. H137, H139, and K220 together coordinate Ni(2+). K220 bears the N6-carboxylysine mark. H222 provides a ligand contact to substrate. H249 and H275 together coordinate Ni(2+). Catalysis depends on H323, which acts as the Proton donor. Position 363 (D363) interacts with Ni(2+).

This sequence belongs to the metallo-dependent hydrolases superfamily. Urease alpha subunit family. In terms of assembly, heterotrimer of UreA (gamma), UreB (beta) and UreC (alpha) subunits. Three heterotrimers associate to form the active enzyme. Ni cation serves as cofactor. Carboxylation allows a single lysine to coordinate two nickel ions.

Its subcellular location is the cytoplasm. The enzyme catalyses urea + 2 H2O + H(+) = hydrogencarbonate + 2 NH4(+). It functions in the pathway nitrogen metabolism; urea degradation; CO(2) and NH(3) from urea (urease route): step 1/1. The sequence is that of Urease subunit alpha from Corynebacterium urealyticum (strain ATCC 43042 / DSM 7109).